Reading from the N-terminus, the 626-residue chain is Solute carrier family 13 member 4 (626 aa).

Helical transmembrane passes span 13-33, 52-72, 77-97, and 113-133; these read LLLV…HPSS, AVPL…FGVL, VAAE…CVAA, and VLMA…CTTL. A compositionally biased stretch (polar residues) spans 217 to 228; that stretch reads SITNPIKTANQH. Residues 217 to 252 are disordered; sequence SITNPIKTANQHQGKKQHPSQEKPQVLTPSPRKQKL. The next 8 helical transmembrane spans lie at 274-294, 309-329, 372-392, 414-434, 466-486, 499-519, 543-563, and 590-610; these read YSAT…LIFL, FGTW…VSWF, ISYP…LWFT, ATVS…KPCF, IVIL…SGLS, LPPW…TEFV, PLYT…LPVG, and VIGL…LFHL.

Belongs to the SLC13A/DASS transporter (TC 2.A.47) family. NADC subfamily. As to expression, highly expressed in placenta and testis with intermediate levels in brain and lower levels in heart, thymus and liver.

The protein resides in the membrane. The enzyme catalyses sulfate(out) + 3 Na(+)(out) = sulfate(in) + 3 Na(+)(in). Transport is inhibited by thiosulfate, phosphate, molybdate, selenate and tungstate. Not inhibited by oxalate, citrate, succinate, phenol red or 4,4'-diisothiocyanostilbene-2,2'-disulfonic acid (DIDS). Sodium:sulfate symporter that mediates sulfate reabsorption in the high endothelial venules (HEV). The sequence is that of Solute carrier family 13 member 4 (SLC13A4) from Homo sapiens (Human).